A 661-amino-acid polypeptide reads, in one-letter code: Heme transporter BhuA (661 aa).

The signal sequence occupies residues 1-23; it reads MKFTRTLVLVSTSLLATVATSQA. Residues 48–159 enclose the TBDR plug domain; sequence KDNIEATGGT…AAGAIRYETV (112 aa). The TBDR beta-barrel domain occupies 170–661; the sequence is TFGARIIGSY…TFTFQTAFKF (492 aa).

Belongs to the TonB-dependent receptor family.

It localises to the cell outer membrane. In terms of biological role, heme transporter playing an important role in stationary-phase iron acquisition and required for maintenance of chronic infection in mice. This chain is Heme transporter BhuA (bhuA), found in Brucella abortus (strain 2308).